The following is a 347-amino-acid chain: Autoinducer 2 import system permease protein LsrC (347 aa).

The next 9 membrane-spanning stretches (helical) occupy residues 14 to 34, 39 to 59, 72 to 92, 93 to 113, 115 to 135, 155 to 175, 213 to 233, 249 to 269, and 284 to 304; these read LLAI…YLSV, MVFS…MVML, GMCA…PVAC, LATL…VAWL, IPAI…MLLW, VFLG…LMAW, LNGG…GFIP, VLGG…ILGA, and IPAW…LVFD.

Belongs to the binding-protein-dependent transport system permease family. AraH/RbsC subfamily. As to quaternary structure, the complex is composed of two ATP-binding proteins (LsrA), two transmembrane proteins (LsrC and LsrD) and a solute-binding protein (LsrB).

The protein resides in the cell inner membrane. Functionally, part of the ABC transporter complex LsrABCD involved in autoinducer 2 (AI-2) import. Probably responsible for the translocation of the substrate across the membrane. The chain is Autoinducer 2 import system permease protein LsrC (lsrC) from Salmonella paratyphi A (strain ATCC 9150 / SARB42).